Reading from the N-terminus, the 375-residue chain is Growth/differentiation factor 8 (375 aa).

The N-terminal stretch at 1-18 (MQKLQIFVYIYLFVLIVA) is a signal peptide. Residues 19-266 (GPVDLNENSE…VTDTPKRSRR (248 aa)) constitute a propeptide that is removed on maturation. N-linked (GlcNAc...) asparagine glycosylation is found at Asn48 and Asn71. 4 disulfides stabilise this stretch: Cys272–Cys282, Cys281–Cys340, Cys309–Cys372, and Cys313–Cys374.

Belongs to the TGF-beta family. In terms of assembly, homodimer; disulfide-linked. Interacts with WFIKKN2, leading to inhibit its activity. Interacts with FSTL3. In terms of processing, synthesized as large precursor molecule that undergoes proteolytic cleavage to generate an N-terminal propeptide and a disulfide linked C-terminal dimer, which is the biologically active molecule. The circulating form consists of a latent complex of the C-terminal dimer and other proteins, including its propeptide, which maintain the C-terminal dimer in a latent, inactive state. Ligand activation requires additional cleavage of the prodomain by a tolloid-like metalloproteinase.

Its subcellular location is the secreted. Acts specifically as a negative regulator of skeletal muscle growth. The chain is Growth/differentiation factor 8 (MSTN) from Aepyceros melampus (Impala).